The primary structure comprises 302 residues: DDRGK domain-containing protein 1 (302 aa).

The helical transmembrane segment at 1 to 21 (MDPLLLGSVGVLVLAVTLIIW) threads the bilayer. Over 22 to 302 (RLLKLQWDEK…IRLETPSAAE (281 aa)) the chain is Cytoplasmic. Residues 101–178 (EYDEDGKKIG…EREEKERKEH (78 aa)) form a disordered region. A compositionally biased stretch (basic and acidic residues) spans 118 to 178 (QAKEEKRQMR…EREEKERKEH (61 aa)).

Belongs to the DDRGK1 family.

The protein localises to the endoplasmic reticulum membrane. Its function is as follows. Substrate adapter for ufmylation, the covalent attachment of the ubiquitin-like modifier ufm-1 to substrate proteins. This Caenorhabditis elegans protein is DDRGK domain-containing protein 1.